Here is a 219-residue protein sequence, read N- to C-terminus: Guanylate kinase (219 aa).

The Guanylate kinase-like domain maps to 15–194 (GLMFVLSSPS…AFAEVHSILK (180 aa)). 22-29 (SPSGAGKT) contacts ATP.

It belongs to the guanylate kinase family.

The protein resides in the cytoplasm. It carries out the reaction GMP + ATP = GDP + ADP. In terms of biological role, essential for recycling GMP and indirectly, cGMP. In Rhodopseudomonas palustris (strain BisB18), this protein is Guanylate kinase.